The chain runs to 138 residues: Glutaredoxin-like protein C5orf63 (138 aa).

An intrachain disulfide couples Cys41 to Cys44. Residues 55 to 64 show a composition bias toward basic and acidic residues; sequence ENRQPYKDQK. The disordered stretch occupies residues 55 to 88; that stretch reads ENRQPYKDQKLPGTRRRRSPSSPSHPHMASQSGK.

It belongs to the glutaredoxin family. YDR286C subfamily.

The protein is Glutaredoxin-like protein C5orf63 (C5orf63) of Homo sapiens (Human).